We begin with the raw amino-acid sequence, 275 residues long: Putative phosphoenolpyruvate synthase regulatory protein (275 aa).

157 to 164 (GVSRCGKT) serves as a coordination point for ADP.

This sequence belongs to the pyruvate, phosphate/water dikinase regulatory protein family. PSRP subfamily.

The catalysed reaction is [pyruvate, water dikinase] + ADP = [pyruvate, water dikinase]-phosphate + AMP + H(+). It catalyses the reaction [pyruvate, water dikinase]-phosphate + phosphate + H(+) = [pyruvate, water dikinase] + diphosphate. Functionally, bifunctional serine/threonine kinase and phosphorylase involved in the regulation of the phosphoenolpyruvate synthase (PEPS) by catalyzing its phosphorylation/dephosphorylation. This Bordetella bronchiseptica (strain ATCC BAA-588 / NCTC 13252 / RB50) (Alcaligenes bronchisepticus) protein is Putative phosphoenolpyruvate synthase regulatory protein.